Consider the following 3430-residue polypeptide: Genome polyprotein (3430 aa).

Residues 2–15 form an interaction with host EXOC1 region; sequence SKKPGGPGKNRAVN. The Cytoplasmic segment spans residues 2-105; that stretch reads SKKPGGPGKN…NRRSTKQKKR (104 aa). The interval 37–72 is hydrophobic; homodimerization of capsid protein C; it reads LIDGKGPIRFVLALLAFFRFTAIAPTRAVLDRWRGV. Residues 106 to 123 constitute a propeptide, ER anchor for the capsid protein C, removed in mature form by serine protease NS3; sequence GGTAGFTILLGLIACAGA. Residues 106 to 126 form a helical membrane-spanning segment; sequence GGTAGFTILLGLIACAGAVTL. Residues 127–248 lie on the Extracellular side of the membrane; sequence SNFQGKVMMT…KATRYLVKTE (122 aa). Asparagine 138 is a glycosylation site (N-linked (GlcNAc...) asparagine; by host). The helical transmembrane segment at 249–269 threads the bilayer; the sequence is SWILRNPGYALVAAVIGWMLG. The Cytoplasmic segment spans residues 270–275; the sequence is SNTMQR. A helical membrane pass occupies residues 276–290; that stretch reads VVFAILLLLVAPAYS. The Extracellular segment spans residues 291–739; the sequence is FNCLGMSNRD…QVFGGAFRSL (449 aa). 6 cysteine pairs are disulfide-bonded: cysteine 293/cysteine 320, cysteine 350/cysteine 406, cysteine 364/cysteine 395, cysteine 382/cysteine 411, cysteine 476/cysteine 574, and cysteine 591/cysteine 622. Residues 388 to 401 are fusion peptide; the sequence is DRGWGNGCGLFGKG. A helical transmembrane segment spans residues 740–760; the sequence is FGGMSWITQGLLGALLLWMGI. At 761-766 the chain is on the cytoplasmic side; the sequence is NARDRS. A helical membrane pass occupies residues 767–787; that stretch reads IAMTFLAVGGVLLFLSVNVHA. The Extracellular segment spans residues 788–1212; sequence DTGCAIDIGR…AFAEANSGGD (425 aa). Disulfide bonds link cysteine 791–cysteine 802 and cysteine 842–cysteine 930. Residues asparagine 917, asparagine 962, and asparagine 994 are each glycosylated (N-linked (GlcNAc...) asparagine; by host). Cystine bridges form between cysteine 966-cysteine 1010, cysteine 1067-cysteine 1116, cysteine 1078-cysteine 1099, and cysteine 1100-cysteine 1103. Residues 1213–1233 form a helical membrane-spanning segment; the sequence is VVHLALMATFKIQPVFLVASF. Over 1234–1243 the chain is Cytoplasmic; that stretch reads LKARWTNQES. A helical membrane pass occupies residues 1244 to 1264; the sequence is ILLMLAAAFFQMAYYDAKNVL. The Lumenal segment spans residues 1265–1278; that stretch reads SWEVPDVLNSLSVA. The helical transmembrane segment at 1279-1299 threads the bilayer; it reads WMILRAISFTNTSNVVVPLLA. The Cytoplasmic portion of the chain corresponds to 1300–1307; it reads LLTPGLKC. Residues 1308 to 1328 traverse the membrane as a helical segment; that stretch reads LNLDVYRILLLMVGVGSLIKE. The Lumenal segment spans residues 1329–1340; it reads KRSSAAKKKGAC. A helical membrane pass occupies residues 1341-1361; it reads LICLALASTGVFNPMILAAGL. Residues 1362-1371 lie on the Cytoplasmic side of the membrane; that stretch reads MACDPNRKRG. A helical membrane pass occupies residues 1372-1392; sequence WPATEVMTAVGLMFAIVGGLA. At 1393 to 1395 the chain is on the lumenal side; the sequence is ELD. Residues 1396 to 1416 traverse the membrane as a helical segment; the sequence is IDSMAIPMTIAGLMFAAFVIS. Residues 1417 to 1473 lie on the Cytoplasmic side of the membrane; it reads GKSTDMWIERTADITWESDAEITGSSERVDVRLDDDGNFQLMNDPGAPWKIWMLRMA. The interval 1424-1463 is interacts with and activates NS3 protease; the sequence is IERTADITWESDAEITGSSERVDVRLDDDGNFQLMNDPGA. An intramembrane region (helical) is located at residues 1474 to 1494; sequence CLAISAYTPWAILPSVIGFWI. The Cytoplasmic portion of the chain corresponds to 1495-2170; the sequence is TLQYTKRGGV…RMALEELPDA (676 aa). Positions 1502-1679 constitute a Peptidase S7 domain; it reads GGVLWDTPSP…ERMEEPAPAG (178 aa). Active-site charge relay system; for serine protease NS3 activity residues include histidine 1552, aspartate 1576, and serine 1636. Residues 1682-1838 form the Helicase ATP-binding domain; sequence PEMLRKKQIT…ESNAPISDMQ (157 aa). The segment at 1686–1689 is important for RNA-binding; it reads RKKQ. 1695–1702 provides a ligand contact to ATP; that stretch reads LHPGAGKT. Residues 1786–1789 carry the DEAH box motif; the sequence is DEAH. In terms of domain architecture, Helicase C-terminal spans 1849–2014; sequence GYEWITEYVG…GLVAQLYQPE (166 aa). An N6-acetyllysine; by host modification is found at lysine 1890. Residues 2165-2169 form a regulates the ATPase activity of NS3 helicase region; sequence EELPD. Residues 2171-2191 traverse the membrane as a helical segment; it reads LQTIVLIALLSVMSLGVFFLL. Over 2192-2196 the chain is Lumenal; it reads MQRKG. The helical intramembrane region spans 2197 to 2217; it reads IGKIGLGGVILGAATFFCWMA. Glutamate 2218 is a topological domain (lumenal). A helical transmembrane segment spans residues 2219-2239; the sequence is VPGTKIAGMLLLSLLLMIVLI. Over 2240–2254 the chain is Cytoplasmic; that stretch reads PEPEKQRSQTDNQLA. A helical membrane pass occupies residues 2255–2275; the sequence is VFLICVLTLVGAVAANEMGWL. Residues 2276-2309 are Lumenal-facing; the sequence is DKTKNDIGSLLGHRPEARETTLGVESFLLDLRPA. The helical intramembrane region spans 2310 to 2330; that stretch reads TAWSLYAVTTAVLTPLLKHLI. Residues 2331–2377 are Lumenal-facing; that stretch reads TSDYINTSLTSINVQASALFTLARGFPFVDVGVSALLLAVGCWGQVT. A helical membrane pass occupies residues 2378-2398; sequence LTVTVTAAALLFCHYAYMVPG. The Cytoplasmic portion of the chain corresponds to 2399–2441; that stretch reads WQAEAMRSAQRRTAAGIMKNVVVDGIVATDVPELERTTPVMQK. A helical transmembrane segment spans residues 2442-2462; that stretch reads KVGQIILILVSMAAVVVNPSV. Topologically, residues 2463–2467 are lumenal; the sequence is RTVRE. A helical transmembrane segment spans residues 2468-2488; it reads AGILTTAAAVTLWENGASSVW. The Cytoplasmic segment spans residues 2489 to 3430; that stretch reads NATTAIGLCH…DTIVVEDTVL (942 aa). The mRNA cap 0-1 NS5-type MT domain maps to 2526–2791; it reads GGAKGRTLGE…DVNLGSGTRA (266 aa). Serine 2581 contributes to the S-adenosyl-L-methionine binding site. Serine 2581 carries the phosphoserine modification. Lysine 2586 functions as the For 2'-O-MTase activity in the catalytic mechanism. Positions 2611, 2612, 2629, 2630, 2656, and 2657 each coordinate S-adenosyl-L-methionine. The active-site For 2'-O-MTase activity is the aspartate 2671. Residue isoleucine 2672 participates in S-adenosyl-L-methionine binding. Catalysis depends on for 2'-O-MTase activity residues lysine 2707 and glutamate 2743. S-adenosyl-L-methionine is bound at residue tyrosine 2745. The Nuclear localization signal signature appears at 2914–2916; that stretch reads RDK. Zn(2+) is bound by residues glutamate 2965, histidine 2969, cysteine 2974, and cysteine 2977. Residues 3055–3207 enclose the RdRp catalytic domain; it reads GKVYADDTAG…KPLDDRFATS (153 aa). Positions 3242, 3258, and 3377 each coordinate Zn(2+). The short motif at 3428–3430 is the PDZ-binding element; sequence TVL.

It in the N-terminal section; belongs to the class I-like SAM-binding methyltransferase superfamily. mRNA cap 0-1 NS5-type methyltransferase family. Homodimer. Interacts (via N-terminus) with host EXOC1 (via C-terminus); this interaction results in EXOC1 degradation through the proteasome degradation pathway. Interacts with host DDX56; this interaction plays an important role in genomic RNA encapsidation. As to quaternary structure, forms heterodimers with envelope protein E in the endoplasmic reticulum and Golgi. In terms of assembly, homodimer; in the endoplasmic reticulum and Golgi. Homodimer; Homohexamer when secreted. Interacts with envelope protein E. NS1 interacts with NS4B. Interacts with host complement protein CFH; this interaction leads to the degradation of C3. As to quaternary structure, interacts (via N-terminus) with serine protease NS3. In terms of assembly, forms a heterodimer with serine protease NS3. May form homooligomers. Forms a heterodimer with NS2B. Interacts with NS4B. Interacts with unphosphorylated RNA-directed RNA polymerase NS5; this interaction stimulates RNA-directed RNA polymerase NS5 guanylyltransferase activity. As to quaternary structure, interacts with Serine protease/Helicase NS3. Interacts with NS1. In terms of assembly, homodimer. Interacts with host STAT2; this interaction inhibits the phosphorylation of the latter, and, when all viral proteins are present (polyprotein), targets STAT2 for degradation. Interacts with host PAF1 complex. Post-translationally, specific enzymatic cleavages in vivo yield mature proteins. Cleavages in the lumen of endoplasmic reticulum are performed by host signal peptidase, whereas cleavages in the cytoplasmic side are performed by serine protease NS3. Signal cleavage at the 2K-4B site requires a prior NS3 protease-mediated cleavage at the 4A-2K site. Cleaved in post-Golgi vesicles by a host furin, releasing the mature small envelope protein M, and peptide pr. This cleavage is incomplete as up to 30% of viral particles still carry uncleaved prM. In terms of processing, not N-glycosylated. Post-translationally, N-glycosylated. The excreted form is glycosylated and this is required for efficient secretion of the protein from infected cells. Acetylated by host KAT5. Acetylation modulates NS3 RNA-binding and unwinding activities and plays an important positive role for viral replication. In terms of processing, phosphorylated on serines residues. This phosphorylation may trigger NS5 nuclear localization.

It is found in the virion. It localises to the host nucleus. The protein localises to the host cytoplasm. Its subcellular location is the host perinuclear region. The protein resides in the secreted. It is found in the virion membrane. It localises to the host endoplasmic reticulum membrane. The enzyme catalyses Selective hydrolysis of -Xaa-Xaa-|-Yaa- bonds in which each of the Xaa can be either Arg or Lys and Yaa can be either Ser or Ala.. It carries out the reaction RNA(n) + a ribonucleoside 5'-triphosphate = RNA(n+1) + diphosphate. It catalyses the reaction a ribonucleoside 5'-triphosphate + H2O = a ribonucleoside 5'-diphosphate + phosphate + H(+). The catalysed reaction is ATP + H2O = ADP + phosphate + H(+). The enzyme catalyses a 5'-end (5'-triphosphoguanosine)-ribonucleoside in mRNA + S-adenosyl-L-methionine = a 5'-end (N(7)-methyl 5'-triphosphoguanosine)-ribonucleoside in mRNA + S-adenosyl-L-homocysteine. It carries out the reaction a 5'-end (N(7)-methyl 5'-triphosphoguanosine)-ribonucleoside in mRNA + S-adenosyl-L-methionine = a 5'-end (N(7)-methyl 5'-triphosphoguanosine)-(2'-O-methyl-ribonucleoside) in mRNA + S-adenosyl-L-homocysteine + H(+). In terms of biological role, plays a role in virus budding by binding to the cell membrane and gathering the viral RNA into a nucleocapsid that forms the core of a mature virus particle. During virus entry, may induce genome penetration into the host cytoplasm after hemifusion induced by the surface proteins. Can migrate to the cell nucleus where it modulates host functions. Overcomes the anti-viral effects of host EXOC1 by sequestering and degrading the latter through the proteasome degradation pathway. Inhibits RNA silencing by interfering with host Dicer. Its function is as follows. Prevents premature fusion activity of envelope proteins in trans-Golgi by binding to envelope protein E at pH6.0. After virion release in extracellular space, gets dissociated from E dimers. Functionally, acts as a chaperone for envelope protein E during intracellular virion assembly by masking and inactivating envelope protein E fusion peptide. prM is the only viral peptide matured by host furin in the trans-Golgi network probably to avoid catastrophic activation of the viral fusion activity in acidic Golgi compartment prior to virion release. prM-E cleavage is inefficient, and many virions are only partially matured. These uncleaved prM would play a role in immune evasion. In terms of biological role, may play a role in virus budding. Exerts cytotoxic effects by activating a mitochondrial apoptotic pathway through M ectodomain. May display a viroporin activity. Binds to host cell surface receptor and mediates fusion between viral and cellular membranes. Envelope protein is synthesized in the endoplasmic reticulum in the form of heterodimer with protein prM. They play a role in virion budding in the ER, and the newly formed immature particle is covered with 60 spikes composed of heterodimer between precursor prM and envelope protein E. The virion is transported to the Golgi apparatus where the low pH causes dissociation of PrM-E heterodimers and formation of E homodimers. prM-E cleavage is inefficient, and many virions are only partially matured. These uncleaved prM would play a role in immune evasion. Its function is as follows. Involved in immune evasion, pathogenesis and viral replication. Once cleaved off the polyprotein, is targeted to three destinations: the viral replication cycle, the plasma membrane and the extracellular compartment. Essential for viral replication. Required for formation of the replication complex and recruitment of other non-structural proteins to the ER-derived membrane structures. Excreted as a hexameric lipoparticle that plays a role against host immune response. Antagonizing the complement function. Binds to the host macrophages and dendritic cells. Inhibits signal transduction originating from Toll-like receptor 3 (TLR3). Functionally, component of the viral RNA replication complex that functions in virion assembly and antagonizes the host alpha/beta interferon antiviral response. In terms of biological role, required cofactor for the serine protease function of NS3. May have membrane-destabilizing activity and form viroporins. Displays three enzymatic activities: serine protease, NTPase and RNA helicase. NS3 serine protease, in association with NS2B, performs its autocleavage and cleaves the polyprotein at dibasic sites in the cytoplasm: C-prM, NS2A-NS2B, NS2B-NS3, NS3-NS4A, NS4A-2K and NS4B-NS5. NS3 RNA helicase binds RNA and unwinds dsRNA in the 3' to 5' direction. NS3 supports the separation of RNA daughter and template strands during viral replication. The helicase part is involved in the inhibition of phosphorylation of host STAT1, and thereby inhibition of host type-I IFN signaling. In addition, NS3 assists the initiation of replication by unwinding the RNA secondary structure in the 3' non-translated region (NTR). Inhibits STAT2 translocation in the nucleus after IFN-alpha treatment. Its function is as follows. Regulates the ATPase activity of the NS3 helicase activity. NS4A allows NS3 helicase to conserve energy during unwinding. Functionally, functions as a signal peptide for NS4B and is required for the interferon antagonism activity of the latter. In terms of biological role, induces the formation of ER-derived membrane vesicles where the viral replication takes place. Inhibits interferon (IFN)-induced host STAT1 phosphorylation and nuclear translocation, thereby preventing the establishment of cellular antiviral state by blocking the IFN-alpha/beta pathway. Inhibits STAT2 translocation in the nucleus after IFN-alpha treatment. Replicates the viral (+) and (-) RNA genome, and performs the capping of genomes in the cytoplasm. NS5 methylates viral RNA cap at guanine N-7 and ribose 2'-O positions. Besides its role in RNA genome replication, also prevents the establishment of cellular antiviral state by blocking the interferon-alpha/beta (IFN-alpha/beta) signaling pathway. Inhibits host TYK2 and STAT2 phosphorylation, thereby preventing activation of JAK-STAT signaling pathway. The polypeptide is Genome polyprotein (Aedes (Tropical bont tick)).